We begin with the raw amino-acid sequence, 660 residues long: Probable cation-transporting P-type ATPase J (660 aa).

A run of 5 helical transmembrane segments spans residues Trp-33 to Pro-53, Leu-60 to Leu-80, Ala-94 to Phe-114, Ile-261 to Leu-281, and Met-292 to Ile-312. Asp-340 (4-aspartylphosphate intermediate) is an active-site residue. Mg(2+) is bound by residues Asp-544 and Asp-548. The chain crosses the membrane as a helical span at residues Ile-598–Leu-618.

It belongs to the cation transport ATPase (P-type) (TC 3.A.3) family. Type IB subfamily.

It localises to the cell membrane. The catalysed reaction is ATP + H2O = ADP + phosphate + H(+). The sequence is that of Probable cation-transporting P-type ATPase J (ctpJ) from Mycobacterium tuberculosis (strain CDC 1551 / Oshkosh).